A 436-amino-acid chain; its full sequence is 3-ketoacyl-CoA thiolase (436 aa).

C99 serves as the catalytic Acyl-thioester intermediate. Residues H392 and C422 each act as proton acceptor in the active site.

It belongs to the thiolase-like superfamily. Thiolase family. Heterotetramer of two alpha chains (FadJ) and two beta chains (FadI).

The protein resides in the cytoplasm. It carries out the reaction an acyl-CoA + acetyl-CoA = a 3-oxoacyl-CoA + CoA. Its pathway is lipid metabolism; fatty acid beta-oxidation. Catalyzes the final step of fatty acid oxidation in which acetyl-CoA is released and the CoA ester of a fatty acid two carbons shorter is formed. In Escherichia coli O157:H7, this protein is 3-ketoacyl-CoA thiolase.